We begin with the raw amino-acid sequence, 671 residues long: UvrABC system protein B (671 aa).

Positions 31–189 (KGFEEGKKEQ…QLVDIQFDRN (159 aa)) constitute a Helicase ATP-binding domain. 44–51 (GATGTGKT) contributes to the ATP binding site. The Beta-hairpin signature appears at 97-120 (YYDYYQPEAYVPSTDTYIEKDSAI). Residues 437 to 599 (QIDDLVGEIN…ITPKTIIKPI (163 aa)) form the Helicase C-terminal domain. In terms of domain architecture, UVR spans 634–669 (KELVANLRSQMQAAAKKLDFEQAASLRDTILELQAD).

The protein belongs to the UvrB family. Forms a heterotetramer with UvrA during the search for lesions. Interacts with UvrC in an incision complex.

It localises to the cytoplasm. The UvrABC repair system catalyzes the recognition and processing of DNA lesions. A damage recognition complex composed of 2 UvrA and 2 UvrB subunits scans DNA for abnormalities. Upon binding of the UvrA(2)B(2) complex to a putative damaged site, the DNA wraps around one UvrB monomer. DNA wrap is dependent on ATP binding by UvrB and probably causes local melting of the DNA helix, facilitating insertion of UvrB beta-hairpin between the DNA strands. Then UvrB probes one DNA strand for the presence of a lesion. If a lesion is found the UvrA subunits dissociate and the UvrB-DNA preincision complex is formed. This complex is subsequently bound by UvrC and the second UvrB is released. If no lesion is found, the DNA wraps around the other UvrB subunit that will check the other stand for damage. The protein is UvrABC system protein B of Lacticaseibacillus casei (strain BL23) (Lactobacillus casei).